Here is a 147-residue protein sequence, read N- to C-terminus: Small ribosomal subunit protein uS12 (147 aa).

This sequence belongs to the universal ribosomal protein uS12 family. In terms of assembly, part of the 30S ribosomal subunit.

Functionally, with S4 and S5 plays an important role in translational accuracy. Located at the interface of the 30S and 50S subunits. This is Small ribosomal subunit protein uS12 from Pyrococcus horikoshii (strain ATCC 700860 / DSM 12428 / JCM 9974 / NBRC 100139 / OT-3).